The primary structure comprises 129 residues: Small ribosomal subunit protein uS9 (129 aa).

The protein belongs to the universal ribosomal protein uS9 family.

This chain is Small ribosomal subunit protein uS9, found in Chlorobium phaeobacteroides (strain DSM 266 / SMG 266 / 2430).